Reading from the N-terminus, the 324-residue chain is tRNA-modifying protein YgfZ (324 aa).

W186 provides a ligand contact to folate.

This sequence belongs to the tRNA-modifying YgfZ family.

The protein resides in the cytoplasm. In terms of biological role, folate-binding protein involved in regulating the level of ATP-DnaA and in the modification of some tRNAs. It is probably a key factor in regulatory networks that act via tRNA modification, such as initiation of chromosomal replication. The chain is tRNA-modifying protein YgfZ from Colwellia psychrerythraea (strain 34H / ATCC BAA-681) (Vibrio psychroerythus).